Consider the following 340-residue polypeptide: Short-chain dehydrogenase/reductase prx1 (340 aa).

5 residues coordinate NADP(+): isoleucine 60, lysine 84, aspartate 104, asparagine 131, and lysine 162. Serine 184 (proton donor) is an active-site residue. 2 residues coordinate NADP(+): tyrosine 210 and lysine 214. Tyrosine 210 acts as the Proton acceptor in catalysis. The active-site Lowers pKa of active site Tyr is lysine 214.

It belongs to the short-chain dehydrogenases/reductases (SDR) family.

It functions in the pathway sesquiterpene biosynthesis. Functionally, short-chain dehydrogenase/reductase; part of the gene cluster that mediates the biosynthesis of PR-toxin, a bicyclic sesquiterpene belonging to the eremophilane class and acting as a mycotoxin. The first step of the pathway is catalyzed by the aristolochene synthase which performs the cyclization of trans,trans-farnesyl diphosphate (FPP) to the bicyclic sesquiterpene aristolochene. Following the formation of aristolochene, the non-oxygenated aristolochene is converted to the trioxygenated intermediate eremofortin B, via 7-epi-neopetasone. This conversion appears to involve three enzymes, a hydroxysterol oxidase-like enzyme, the quinone-oxidase prx3 that forms the quinone-type-structure in the bicyclic nucleus of aristolochene with the C8-oxo group and the C-3 hydroxyl group, and the P450 monooxygenase ORF6 that introduces the epoxide at the double bond between carbons 1 and 2. No monoxy or dioxy-intermediates have been reported to be released to the broth, so these three early oxidative reactions may be coupled together. Eremofortin B is further oxidized by another P450 monooxygenase, that introduces a second epoxide between carbons 7 and 11 prior to acetylation to eremofortin A by the acetyltransferase ORF8. The second epoxidation may be performed by a second P450 monooxygenase. After the acetylation step, eremofortin A is converted to eremofortin C and then to PR-toxin. First the conversion of eremofortin A to eremofortin C proceeds by oxidation of the side chain of the molecule at C-12 and is catalyzed by the short-chain oxidoreductase prx1. The cytochrome P450 monooxygenase ORF6 is probably also involved in this step. The primary alcohol formed at C-12 is finally oxidized by the short-chain alcohol dehydrogenase prx4 that forms PR-toxin. This is Short-chain dehydrogenase/reductase prx1 from Penicillium roqueforti (strain FM164).